The chain runs to 880 residues: DNA mismatch repair protein MutS (880 aa).

Position 625-632 (625-632) interacts with ATP; it reads GPNMAGKS.

This sequence belongs to the DNA mismatch repair MutS family.

This protein is involved in the repair of mismatches in DNA. It is possible that it carries out the mismatch recognition step. This protein has a weak ATPase activity. The protein is DNA mismatch repair protein MutS of Alkaliphilus oremlandii (strain OhILAs) (Clostridium oremlandii (strain OhILAs)).